Consider the following 143-residue polypeptide: Transcriptional regulator MraZ (143 aa).

SpoVT-AbrB domains are found at residues 5-47 (EYHH…PMQG) and 76-119 (ATEC…SRSR).

The protein belongs to the MraZ family. As to quaternary structure, forms oligomers.

It localises to the cytoplasm. It is found in the nucleoid. The polypeptide is Transcriptional regulator MraZ (Moorella thermoacetica (strain ATCC 39073 / JCM 9320)).